Here is a 602-residue protein sequence, read N- to C-terminus: Sulfite reductase [NADPH] hemoprotein beta-component (602 aa).

The segment covering 1–15 has biased composition (basic and acidic residues); sequence MDDHKTASPPRERSY. The disordered stretch occupies residues 1–24; sequence MDDHKTASPPRERSYETPPAERPI. 4 residues coordinate [4Fe-4S] cluster: Cys-458, Cys-464, Cys-503, and Cys-507. Cys-507 provides a ligand contact to siroheme.

This sequence belongs to the nitrite and sulfite reductase 4Fe-4S domain family. In terms of assembly, alpha(8)-beta(8). The alpha component is a flavoprotein, the beta component is a hemoprotein. Siroheme is required as a cofactor. It depends on [4Fe-4S] cluster as a cofactor.

The enzyme catalyses hydrogen sulfide + 3 NADP(+) + 3 H2O = sulfite + 3 NADPH + 4 H(+). The protein operates within sulfur metabolism; hydrogen sulfide biosynthesis; hydrogen sulfide from sulfite (NADPH route): step 1/1. Functionally, component of the sulfite reductase complex that catalyzes the 6-electron reduction of sulfite to sulfide. This is one of several activities required for the biosynthesis of L-cysteine from sulfate. The polypeptide is Sulfite reductase [NADPH] hemoprotein beta-component (Methylobacterium nodulans (strain LMG 21967 / CNCM I-2342 / ORS 2060)).